A 225-amino-acid polypeptide reads, in one-letter code: Probable GTP-binding protein EngB (225 aa).

In terms of domain architecture, EngB-type G spans 40–224 (GPPEVAFAGR…RAAIVHAVTA (185 aa)). GTP is bound by residues 48–55 (GRSNVGKS), 75–79 (GRTQE), 102–105 (DMPG), 169–172 (TKAD), and 203–205 (TSS). 2 residues coordinate Mg(2+): Ser-55 and Thr-77.

This sequence belongs to the TRAFAC class TrmE-Era-EngA-EngB-Septin-like GTPase superfamily. EngB GTPase family. It depends on Mg(2+) as a cofactor.

In terms of biological role, necessary for normal cell division and for the maintenance of normal septation. This chain is Probable GTP-binding protein EngB, found in Chelativorans sp. (strain BNC1).